Consider the following 143-residue polypeptide: Transcriptional regulator MraZ (143 aa).

2 SpoVT-AbrB domains span residues 5–47 and 76–119; these read TYTP…PKEE and TDEQ…DKQA.

The protein belongs to the MraZ family. As to quaternary structure, forms oligomers.

It is found in the cytoplasm. The protein resides in the nucleoid. The polypeptide is Transcriptional regulator MraZ (Nocardia farcinica (strain IFM 10152)).